A 153-amino-acid chain; its full sequence is Endoribonuclease YbeY (153 aa).

Zn(2+) is bound by residues His112, His116, and His122.

This sequence belongs to the endoribonuclease YbeY family. Zn(2+) is required as a cofactor.

It localises to the cytoplasm. In terms of biological role, single strand-specific metallo-endoribonuclease involved in late-stage 70S ribosome quality control and in maturation of the 3' terminus of the 16S rRNA. The polypeptide is Endoribonuclease YbeY (Persephonella marina (strain DSM 14350 / EX-H1)).